The primary structure comprises 282 residues: Elongation factor Ts (282 aa).

Positions Thr80–Val83 are involved in Mg(2+) ion dislocation from EF-Tu.

This sequence belongs to the EF-Ts family.

The protein resides in the cytoplasm. In terms of biological role, associates with the EF-Tu.GDP complex and induces the exchange of GDP to GTP. It remains bound to the aminoacyl-tRNA.EF-Tu.GTP complex up to the GTP hydrolysis stage on the ribosome. The sequence is that of Elongation factor Ts from Chlamydia trachomatis serovar L2 (strain ATCC VR-902B / DSM 19102 / 434/Bu).